The sequence spans 729 residues: Fatty acid oxidation complex subunit alpha (729 aa).

The tract at residues 1 to 189 (MLYKGDTLYL…KIGLVDGVVK (189 aa)) is enoyl-CoA hydratase/isomerase. Position 296 (Asp296) interacts with substrate. Positions 311 to 729 (ETPKQAAVLG…ARPVGDLKTA (419 aa)) are 3-hydroxyacyl-CoA dehydrogenase. NAD(+)-binding positions include Met324, Asp343, 400–402 (VVE), Lys407, and Ser429. The active-site For 3-hydroxyacyl-CoA dehydrogenase activity is His450. An NAD(+)-binding site is contributed by Asn453. Substrate-binding residues include Asn500 and Tyr660. Residues 708 to 729 (RHNEPYYPPVEPARPVGDLKTA) are disordered.

In the N-terminal section; belongs to the enoyl-CoA hydratase/isomerase family. It in the C-terminal section; belongs to the 3-hydroxyacyl-CoA dehydrogenase family. As to quaternary structure, heterotetramer of two alpha chains (FadB) and two beta chains (FadA).

The enzyme catalyses a (3S)-3-hydroxyacyl-CoA + NAD(+) = a 3-oxoacyl-CoA + NADH + H(+). It carries out the reaction a (3S)-3-hydroxyacyl-CoA = a (2E)-enoyl-CoA + H2O. The catalysed reaction is a 4-saturated-(3S)-3-hydroxyacyl-CoA = a (3E)-enoyl-CoA + H2O. It catalyses the reaction (3S)-3-hydroxybutanoyl-CoA = (3R)-3-hydroxybutanoyl-CoA. The enzyme catalyses a (3Z)-enoyl-CoA = a 4-saturated (2E)-enoyl-CoA. It carries out the reaction a (3E)-enoyl-CoA = a 4-saturated (2E)-enoyl-CoA. Its pathway is lipid metabolism; fatty acid beta-oxidation. Functionally, involved in the aerobic and anaerobic degradation of long-chain fatty acids via beta-oxidation cycle. Catalyzes the formation of 3-oxoacyl-CoA from enoyl-CoA via L-3-hydroxyacyl-CoA. It can also use D-3-hydroxyacyl-CoA and cis-3-enoyl-CoA as substrate. This Escherichia coli (strain UTI89 / UPEC) protein is Fatty acid oxidation complex subunit alpha.